A 340-amino-acid chain; its full sequence is UDP-3-O-(3-hydroxymyristoyl)glucosamine N-acyltransferase (340 aa).

The Proton acceptor role is filled by His-239.

Belongs to the transferase hexapeptide repeat family. LpxD subfamily. As to quaternary structure, homotrimer.

The catalysed reaction is a UDP-3-O-[(3R)-3-hydroxyacyl]-alpha-D-glucosamine + a (3R)-hydroxyacyl-[ACP] = a UDP-2-N,3-O-bis[(3R)-3-hydroxyacyl]-alpha-D-glucosamine + holo-[ACP] + H(+). The enzyme catalyses UDP-3-O-[(3R)-3-hydroxytetradecanoyl]-alpha-D-glucosamine + (3R)-hydroxytetradecanoyl-[ACP] = UDP-2-N,3-O-bis[(3R)-3-hydroxytetradecanoyl]-alpha-D-glucosamine + holo-[ACP] + H(+). Its pathway is glycolipid biosynthesis; lipid IV(A) biosynthesis; lipid IV(A) from (3R)-3-hydroxytetradecanoyl-[acyl-carrier-protein] and UDP-N-acetyl-alpha-D-glucosamine: step 3/6. Catalyzes the N-acylation of UDP-3-O-(hydroxytetradecanoyl)glucosamine using 3-hydroxytetradecanoyl-ACP as the acyl donor. Is involved in the biosynthesis of lipid A, a phosphorylated glycolipid that anchors the lipopolysaccharide to the outer membrane of the cell. The sequence is that of UDP-3-O-(3-hydroxymyristoyl)glucosamine N-acyltransferase from Pectobacterium atrosepticum (strain SCRI 1043 / ATCC BAA-672) (Erwinia carotovora subsp. atroseptica).